The primary structure comprises 511 residues: uncharacterized protein (511 aa).

The disordered stretch occupies residues 59 to 79; the sequence is VPVAANDDQPDGSRQSVRGRQ.

The protein belongs to the transposase 25 family.

This is an uncharacterized protein from Sinorhizobium fredii (strain NBRC 101917 / NGR234).